A 90-amino-acid chain; its full sequence is Potassium channel toxin BmTXK-beta (90 aa).

Residues 1-22 (MMKQQFFLFLAVIVMISSVIEA) form the signal peptide. The propeptide occupies 23–29 (GRGKEIM). Positions 55–90 (EYACPVIEKWCEDHCAAKKAIGKCEDTECKCLKLRK) constitute a BetaSPN-type CS-alpha/beta domain. 3 disulfide bridges follow: C58-C78, C65-C83, and C69-C85.

This sequence belongs to the long chain scorpion toxin family. Class 2 subfamily. As to expression, expressed by the venom gland.

Its subcellular location is the secreted. In terms of biological role, this recombinant peptide reversibly and dose-dependently inhibits the transient outward potassium current (I(To)) of rabbit atrial myocyte and prolongs the action potential duration of rabbit atrial myocyte without affecting the action potential amplitude. Thus, the voltage-gated potassium channels Kv4.1/KCND1, Kv4.2/KCND2, Kv4.3/KCND3 may be the target of this toxin. The sequence is that of Potassium channel toxin BmTXK-beta from Olivierus martensii (Manchurian scorpion).